Here is a 221-residue protein sequence, read N- to C-terminus: Translation initiation factor 6 (221 aa).

This sequence belongs to the eIF-6 family.

Its function is as follows. Binds to the 50S ribosomal subunit and prevents its association with the 30S ribosomal subunit to form the 70S initiation complex. This is Translation initiation factor 6 from Natronomonas pharaonis (strain ATCC 35678 / DSM 2160 / CIP 103997 / JCM 8858 / NBRC 14720 / NCIMB 2260 / Gabara) (Halobacterium pharaonis).